A 312-amino-acid chain; its full sequence is Olfactory receptor 2B8 (312 aa).

At 1 to 25 (MDQKNGSSFTGFILLGFSDRPQLEL) the chain is on the extracellular side. Asn5 is a glycosylation site (N-linked (GlcNAc...) asparagine). A helical transmembrane segment spans residues 26-49 (VLFVVLLIFYIFTLLGNKTIIVLS). Over 50 to 57 (HLDPHLHT) the chain is Cytoplasmic. The chain crosses the membrane as a helical span at residues 58-79 (PMYFFFSNLSFLDLCYTTGIVP). The Extracellular segment spans residues 80–100 (QLLVNLRGADKSISYGGCVVQ). Cys97 and Cys189 are disulfide-bonded. Residues 101–120 (LYISLGLGSTECVLLGVMVF) traverse the membrane as a helical segment. Topologically, residues 121–139 (DRYAAVCRPLHYTVVMHPC) are cytoplasmic. A helical transmembrane segment spans residues 140–158 (LYVLMASTSWVIGFANSLL). The Extracellular segment spans residues 159–195 (QTVLILLLTLCGRNKLEHFLCEVPPLLKLACVDTTMN). Asn195 carries N-linked (GlcNAc...) asparagine glycosylation. Residues 196-219 (ESELFFVSVIILLVPVALIIFSYS) form a helical membrane-spanning segment. Over 220–236 (QIVRAVMRIKLATGQRK) the chain is Cytoplasmic. Residues 237-259 (VFGTCGSHLTVVSLFYGTAIYAY) form a helical membrane-spanning segment. Residues 260 to 272 (LQPGNNYSQDQGK) lie on the Extracellular side of the membrane. Asn265 carries an N-linked (GlcNAc...) asparagine glycan. The helical transmembrane segment at 273-292 (FISLFYTIITPMINPLIYTL) threads the bilayer. Topologically, residues 293–312 (RNKDVKGALKKVLWKNYDSR) are cytoplasmic.

It belongs to the G-protein coupled receptor 1 family.

It localises to the cell membrane. Odorant receptor. This chain is Olfactory receptor 2B8, found in Homo sapiens (Human).